Reading from the N-terminus, the 555-residue chain is MNIQTIMSSFTAQDKDQEVRPSSSGSWACKEVDEFDALSIEYKPKPTEKYPAKLHARNVRKYLDVGEGLIYLPGLPSFNYEDSDMPPAFRQRRYFYYITGVNLSDCIVTYNIHRDQLWLWIPPPNSGRSVIYNGARPTIKEIMSKYDFDHVETLTHLDSYLTWYAHTEPGKIHVLHDYQAPKNIELQITRKNGCHSIISESPFDSSKLEEAMNTARAIKSPYELRMIRKASAITAQGHLNVLRGLRHLSNEAEIEAIFTATCIAKQAKTQAYGVIAGSGENASTLHYMANNEPLKGRQLLCLDAGCEWDCYASDVTRTVPISGEYTEEAEAIYDIVAKMQDECIELLKPGANYRDIHIHAHKVALKGLMDLGLVEGGTFDELFMAGVSVAFFPHGLGHYVGLEVHDVGPGGSRITNRLYGFDKKPADWTDAYFQILSNTGVTSDGGSILEKDMVVTVEPGIYFSRYALEEVYLKSPNYAKYINKDLLQKYYPVGGVRIEDDLLITEDGYENLTTVLKGKEALKIINEGKEQEEEEEREANRKATESRKQKKTWFW.

Mn(2+) is bound by residues Asp-303, Asp-314, Glu-458, and Glu-499. The segment at 527–555 (EGKEQEEEEEREANRKATESRKQKKTWFW) is disordered. The segment covering 538-547 (EANRKATESR) has biased composition (basic and acidic residues).

This sequence belongs to the peptidase M24B family. The cofactor is Mn(2+).

The catalysed reaction is Release of any N-terminal amino acid, including proline, that is linked to proline, even from a dipeptide or tripeptide.. Catalyzes the removal of a penultimate prolyl residue from the N-termini of peptides. This is Probable Xaa-Pro aminopeptidase BC1G_13431 from Botryotinia fuckeliana (strain B05.10) (Noble rot fungus).